A 427-amino-acid chain; its full sequence is 3-phosphoshikimate 1-carboxyvinyltransferase (427 aa).

3-phosphoshikimate is bound by residues lysine 20, serine 21, and arginine 25. Residue lysine 20 coordinates phosphoenolpyruvate. Phosphoenolpyruvate-binding residues include glycine 92 and arginine 120. 3-phosphoshikimate is bound by residues serine 166, glutamine 168, aspartate 312, and lysine 339. Position 168 (glutamine 168) interacts with phosphoenolpyruvate. Aspartate 312 (proton acceptor) is an active-site residue. 2 residues coordinate phosphoenolpyruvate: arginine 343 and arginine 385.

This sequence belongs to the EPSP synthase family. Monomer.

It is found in the cytoplasm. The enzyme catalyses 3-phosphoshikimate + phosphoenolpyruvate = 5-O-(1-carboxyvinyl)-3-phosphoshikimate + phosphate. Its pathway is metabolic intermediate biosynthesis; chorismate biosynthesis; chorismate from D-erythrose 4-phosphate and phosphoenolpyruvate: step 6/7. In terms of biological role, catalyzes the transfer of the enolpyruvyl moiety of phosphoenolpyruvate (PEP) to the 5-hydroxyl of shikimate-3-phosphate (S3P) to produce enolpyruvyl shikimate-3-phosphate and inorganic phosphate. This chain is 3-phosphoshikimate 1-carboxyvinyltransferase, found in Streptococcus equi subsp. equi (strain 4047).